We begin with the raw amino-acid sequence, 314 residues long: Homoserine O-succinyltransferase (314 aa).

C142 (acyl-thioester intermediate) is an active-site residue. Residues K163 and S192 each contribute to the substrate site. H235 acts as the Proton acceptor in catalysis. Residue E237 is part of the active site. R249 lines the substrate pocket.

It belongs to the MetA family.

It is found in the cytoplasm. The catalysed reaction is L-homoserine + succinyl-CoA = O-succinyl-L-homoserine + CoA. Its pathway is amino-acid biosynthesis; L-methionine biosynthesis via de novo pathway; O-succinyl-L-homoserine from L-homoserine: step 1/1. Functionally, transfers a succinyl group from succinyl-CoA to L-homoserine, forming succinyl-L-homoserine. This is Homoserine O-succinyltransferase from Shewanella pealeana (strain ATCC 700345 / ANG-SQ1).